A 224-amino-acid polypeptide reads, in one-letter code: 7-cyano-7-deazaguanine synthase (224 aa).

10-20 (LSGGLDSATVA) contacts ATP. Residues Cys-189, Cys-199, Cys-202, and Cys-205 each contribute to the Zn(2+) site.

Belongs to the QueC family. Zn(2+) serves as cofactor.

The catalysed reaction is 7-carboxy-7-deazaguanine + NH4(+) + ATP = 7-cyano-7-deazaguanine + ADP + phosphate + H2O + H(+). Its pathway is purine metabolism; 7-cyano-7-deazaguanine biosynthesis. In terms of biological role, catalyzes the ATP-dependent conversion of 7-carboxy-7-deazaguanine (CDG) to 7-cyano-7-deazaguanine (preQ(0)). This chain is 7-cyano-7-deazaguanine synthase, found in Azotobacter vinelandii (strain DJ / ATCC BAA-1303).